A 584-amino-acid chain; its full sequence is DNA mismatch repair protein MutL (584 aa).

This sequence belongs to the DNA mismatch repair MutL/HexB family.

Functionally, this protein is involved in the repair of mismatches in DNA. It is required for dam-dependent methyl-directed DNA mismatch repair. May act as a 'molecular matchmaker', a protein that promotes the formation of a stable complex between two or more DNA-binding proteins in an ATP-dependent manner without itself being part of a final effector complex. This Buchnera aphidicola subsp. Acyrthosiphon pisum (strain 5A) protein is DNA mismatch repair protein MutL.